The sequence spans 292 residues: CCR4-NOT transcription complex subunit 8 (292 aa).

Positions 40, 42, 161, and 230 each coordinate a divalent metal cation.

Belongs to the CAF1 family. In terms of assembly, component of the CCR4-NOT complex; distinct complexes seem to exist that differ in the participation of probably mutually exclusive catalytic subunits; the complex contains two deadenylase subunits, CNOT6 or CNOT6L, and CNOT7 or CNOT8. In the complex interacts directly with CNOT1. Interacts with BTG1, BTG2 and TOB1. Interacts with BTG4.

The protein resides in the cytoplasm. Its subcellular location is the nucleus. It catalyses the reaction Exonucleolytic cleavage of poly(A) to 5'-AMP.. Functionally, has 3'-5' poly(A) exoribonuclease activity for synthetic poly(A) RNA substrate. Its function seems to be partially redundant with that of CNOT7. Catalytic component of the CCR4-NOT complex which is linked to various cellular processes including bulk mRNA degradation, miRNA-mediated repression, translational repression during translational initiation and general transcription regulation. During miRNA-mediated repression the complex also seems to act as translational repressor during translational initiation. Additional complex functions may be a consequence of its influence on mRNA expression. Associates with members of the BTG family such as TOB1 and BTG2 and is required for their anti-proliferative activity. The sequence is that of CCR4-NOT transcription complex subunit 8 (Cnot8) from Mus musculus (Mouse).